The following is a 378-amino-acid chain: Probable methyltransferase At1g29790 (378 aa).

At 1-6 the chain is on the cytoplasmic side; sequence MAGFTM. A helical; Signal-anchor for type II membrane protein transmembrane segment spans residues 7–29; sequence SLNLLLLVAMVATNILSLYHLSS. At 30–378 the chain is on the lumenal side; sequence TTNFFQSTVK…TALLQKPVAR (349 aa). The tract at residues 67–87 is disordered; the sequence is TTHQPDKSTSTSTSRAAVSSS. Over residues 74–87 the composition is skewed to low complexity; that stretch reads STSTSTSRAAVSSS. N-linked (GlcNAc...) asparagine glycosylation is present at Asn-247.

It belongs to the methyltransferase superfamily.

The protein localises to the golgi apparatus membrane. The polypeptide is Probable methyltransferase At1g29790 (Arabidopsis thaliana (Mouse-ear cress)).